A 364-amino-acid polypeptide reads, in one-letter code: Dihydroorotate dehydrogenase (quinone) (364 aa).

Residues 61-65 (AGFDK) and Thr-85 each bind FMN. Lys-65 is a binding site for substrate. 110–114 (NRMGF) is a substrate binding site. Residues Asn-139 and Asn-170 each contribute to the FMN site. Position 170 (Asn-170) interacts with substrate. The active-site Nucleophile is the Ser-173. Position 175 (Asn-175) interacts with substrate. Lys-214 and Ala-242 together coordinate FMN. 243–244 (NT) is a substrate binding site. Residues Gly-266, Gly-295, and 316-317 (YS) contribute to the FMN site.

This sequence belongs to the dihydroorotate dehydrogenase family. Type 2 subfamily. As to quaternary structure, monomer. It depends on FMN as a cofactor.

Its subcellular location is the cell membrane. The catalysed reaction is (S)-dihydroorotate + a quinone = orotate + a quinol. It functions in the pathway pyrimidine metabolism; UMP biosynthesis via de novo pathway; orotate from (S)-dihydroorotate (quinone route): step 1/1. Its function is as follows. Catalyzes the conversion of dihydroorotate to orotate with quinone as electron acceptor. The chain is Dihydroorotate dehydrogenase (quinone) from Rhodopseudomonas palustris (strain HaA2).